Consider the following 466-residue polypeptide: MAKTLYEKLFDAHVVYEAENETPLLYIDRHLVHEVTSPQAFNGLRAHGRPVRQPGKTFATMDHNVSTQTKDINACGEMARIQMQELIKNCKEFGVELYDLNHPYQGIVHVMGPEQGVTLPGMTIVCGDSHTATHGAFGALAFGIGTSEVEHVLATQTLKQGRAKTMKIEVQGKAAPGITAKDIVLAIIGKTGSAGGTGHVVEFCGEAIRDLSMEGRMTLCNMAIEMGAKTGLVAPDETTFNYVKGRLHAPKGKDFDDAVAYWKTLQTDEGATFDTVVTLQAEEISPQVTWGTNPGQVISVNDNIPDPASFADPVKRASAEKALAYMGLKPGIPLTEVAIDKVFIGSCTNSRIEDLRAAAEIAKGRKVAPGVQALVVPGSGPVKAQAEAEGLDKIFIEAGFEWRLPGCSMCLAMNNDRLNPGERCASTSNRNFEGRQGRGGRTHLVSPAMAAAAAVTGHFADIRNIK.

[4Fe-4S] cluster-binding residues include cysteine 347, cysteine 407, and cysteine 410.

Belongs to the aconitase/IPM isomerase family. LeuC type 1 subfamily. As to quaternary structure, heterodimer of LeuC and LeuD. [4Fe-4S] cluster serves as cofactor.

The enzyme catalyses (2R,3S)-3-isopropylmalate = (2S)-2-isopropylmalate. It participates in amino-acid biosynthesis; L-leucine biosynthesis; L-leucine from 3-methyl-2-oxobutanoate: step 2/4. Catalyzes the isomerization between 2-isopropylmalate and 3-isopropylmalate, via the formation of 2-isopropylmaleate. In Shigella sonnei (strain Ss046), this protein is 3-isopropylmalate dehydratase large subunit.